The sequence spans 528 residues: Peptide chain release factor 3 (528 aa).

The tr-type G domain maps to 11–279 (SDRRTFAIIS…GFVEWAPAPI (269 aa)). GTP is bound by residues 20–27 (SHPDAGKT), 88–92 (DTPGH), and 142–145 (NKMD).

Belongs to the TRAFAC class translation factor GTPase superfamily. Classic translation factor GTPase family. PrfC subfamily.

The protein localises to the cytoplasm. In terms of biological role, increases the formation of ribosomal termination complexes and stimulates activities of RF-1 and RF-2. It binds guanine nucleotides and has strong preference for UGA stop codons. It may interact directly with the ribosome. The stimulation of RF-1 and RF-2 is significantly reduced by GTP and GDP, but not by GMP. In Marinomonas sp. (strain MWYL1), this protein is Peptide chain release factor 3.